The following is a 444-amino-acid chain: Deoxyguanosinetriphosphate triphosphohydrolase-like protein (444 aa).

Positions 66–259 (RLTHSLEAAQ…MELADDIAYG (194 aa)) constitute an HD domain.

It belongs to the dGTPase family. Type 2 subfamily.

The protein is Deoxyguanosinetriphosphate triphosphohydrolase-like protein of Vibrio campbellii (strain ATCC BAA-1116).